Reading from the N-terminus, the 582-residue chain is Putative transcriptional regulator HVO_1357 (582 aa).

Positions 19-129 (VVLVVDDDED…EVKETVEELL (111 aa)) constitute a Response regulatory domain. Asp-67 carries the post-translational modification 4-aspartylphosphate. Residues 165 to 203 (LSDLRSRLEAVRAEHEAAIRNREAQLDRLNRTNELLRDV) adopt a coiled-coil conformation. Residues 517-569 (LTDRQRTVLETSLVSGYFEWPRGSTAEEVADSLGISPPTLHEHLRTAERKLIE) enclose the HTH bat-type domain.

Functionally, may be part of a signal-dependent gene regulation cascade that is relevant to swimming motility. May be involved in the transcription regulation of target genes. The protein is Putative transcriptional regulator HVO_1357 of Haloferax volcanii (strain ATCC 29605 / DSM 3757 / JCM 8879 / NBRC 14742 / NCIMB 2012 / VKM B-1768 / DS2) (Halobacterium volcanii).